A 366-amino-acid chain; its full sequence is Growth hormone secretagogue receptor type 1 (366 aa).

Residues 1 to 40 (MWNATPSEEPGFNLTLADLDWDASPGNDSLGDELLQLFPA) are Extracellular-facing. N-linked (GlcNAc...) asparagine glycosylation is found at Asn-13 and Asn-27. A helical membrane pass occupies residues 41–66 (PLLAGVTATCVALFVVGIAGNLLTML). At 67-72 (VVSRFR) the chain is on the cytoplasmic side. Residues 73–96 (ELRTTTNLYLSSMAFSDLLIFLCM) traverse the membrane as a helical segment. Topologically, residues 97 to 117 (PLDLVRLWQYRPWNFGDLLCK) are extracellular. The cysteines at positions 116 and 198 are disulfide-linked. The chain crosses the membrane as a helical span at residues 118-139 (LFQFVSESCTYATVLTITALSV). Topologically, residues 140–162 (ERYFAICFPLRAKVVVTKGRVKL) are cytoplasmic. Residues 163 to 183 (VIFVIWAVAFCSAGPIFVLVG) form a helical membrane-spanning segment. At 184–211 (VEHENGTDPWDTNECRPTEFAVRSGLLT) the chain is on the extracellular side. A helical membrane pass occupies residues 212–235 (VMVWVSSIFFFLPVFCLTVLYSLI). Topologically, residues 236–263 (GRKLWRRRRGDAVVGASLRDQNHKQTVK) are cytoplasmic. Residues 264–285 (MLAVVVFAFILCWLPFHVGRYL) form a helical membrane-spanning segment. Topologically, residues 286–302 (FSKSFEPGSLEIAQISQ) are extracellular. Residues 303-326 (YCNLVSFVLFYLSAAINPILYNIM) form a helical membrane-spanning segment. Residues 327-366 (SKKYRVAVFRLLGFEPFSQRKLSTLKDESSRAWTESSINT) lie on the Cytoplasmic side of the membrane.

Belongs to the G-protein coupled receptor 1 family. In terms of tissue distribution, pituitary and hypothalamus.

The protein localises to the cell membrane. In terms of biological role, receptor for ghrelin, coupled to G-alpha-11 proteins. Stimulates growth hormone secretion. Also binds other growth hormone releasing peptides (GHRP) (e.g. Met-enkephalin and GHRP-6) as well as non-peptide, low molecular weight secretagogues (e.g. L-692,429, MK-0677, adenosine). This Homo sapiens (Human) protein is Growth hormone secretagogue receptor type 1 (GHSR).